A 152-amino-acid chain; its full sequence is SsrA-binding protein (152 aa).

Belongs to the SmpB family.

The protein resides in the cytoplasm. Its function is as follows. Required for rescue of stalled ribosomes mediated by trans-translation. Binds to transfer-messenger RNA (tmRNA), required for stable association of tmRNA with ribosomes. tmRNA and SmpB together mimic tRNA shape, replacing the anticodon stem-loop with SmpB. tmRNA is encoded by the ssrA gene; the 2 termini fold to resemble tRNA(Ala) and it encodes a 'tag peptide', a short internal open reading frame. During trans-translation Ala-aminoacylated tmRNA acts like a tRNA, entering the A-site of stalled ribosomes, displacing the stalled mRNA. The ribosome then switches to translate the ORF on the tmRNA; the nascent peptide is terminated with the 'tag peptide' encoded by the tmRNA and targeted for degradation. The ribosome is freed to recommence translation, which seems to be the essential function of trans-translation. This is SsrA-binding protein from Rickettsia montanensis.